The sequence spans 425 residues: Probable threonylcarbamoyladenosine tRNA methylthiotransferase (425 aa).

The MTTase N-terminal domain occupies 2 to 110 (VKVYIENYGC…IVQAVEYAMR (109 aa)). Positions 11, 47, 76, 148, 152, and 155 each coordinate [4Fe-4S] cluster. One can recognise a Radical SAM core domain in the interval 134 to 363 (SPRNVYFILP…HRIRLQISYE (230 aa)). In terms of domain architecture, TRAM spans 366 to 425 (RKYIGKKVKVLIHGEGKKGNVDAVTMNYKHIILPEGRKGEFREARVKNAASTYLLGEIIT).

This sequence belongs to the methylthiotransferase family. CDKAL1 subfamily. [4Fe-4S] cluster is required as a cofactor.

The enzyme catalyses N(6)-L-threonylcarbamoyladenosine(37) in tRNA + (sulfur carrier)-SH + AH2 + 2 S-adenosyl-L-methionine = 2-methylsulfanyl-N(6)-L-threonylcarbamoyladenosine(37) in tRNA + (sulfur carrier)-H + 5'-deoxyadenosine + L-methionine + A + S-adenosyl-L-homocysteine + 2 H(+). Its function is as follows. Catalyzes the methylthiolation of N6-threonylcarbamoyladenosine (t(6)A), leading to the formation of 2-methylthio-N6-threonylcarbamoyladenosine (ms(2)t(6)A) at position 37 in tRNAs that read codons beginning with adenine. This chain is Probable threonylcarbamoyladenosine tRNA methylthiotransferase, found in Pyrococcus horikoshii (strain ATCC 700860 / DSM 12428 / JCM 9974 / NBRC 100139 / OT-3).